Reading from the N-terminus, the 569-residue chain is CTP synthase (569 aa).

The segment at 1–276 (MNQATPTKHV…DAYLVRRLDL (276 aa)) is amidoligase domain. Ser-18 contacts CTP. Residue Ser-18 participates in UTP binding. Residues 19–24 (SLGKGL) and Asp-76 contribute to the ATP site. 2 residues coordinate Mg(2+): Asp-76 and Glu-150. CTP contacts are provided by residues 157-159 (DIE), 197-202 (KTKPTQ), and Lys-233. Residues 197–202 (KTKPTQ) and Lys-233 contribute to the UTP site. In terms of domain architecture, Glutamine amidotransferase type-1 spans 301 to 550 (TVALVGKYVD…VGAAIERQRE (250 aa)). Gly-364 serves as a coordination point for L-glutamine. Cys-391 serves as the catalytic Nucleophile; for glutamine hydrolysis. L-glutamine-binding positions include 392–395 (LGLQ), Glu-415, and Arg-476. Active-site residues include His-523 and Glu-525.

This sequence belongs to the CTP synthase family. In terms of assembly, homotetramer.

The enzyme catalyses UTP + L-glutamine + ATP + H2O = CTP + L-glutamate + ADP + phosphate + 2 H(+). It carries out the reaction L-glutamine + H2O = L-glutamate + NH4(+). The catalysed reaction is UTP + NH4(+) + ATP = CTP + ADP + phosphate + 2 H(+). Its pathway is pyrimidine metabolism; CTP biosynthesis via de novo pathway; CTP from UDP: step 2/2. Allosterically activated by GTP, when glutamine is the substrate; GTP has no effect on the reaction when ammonia is the substrate. The allosteric effector GTP functions by stabilizing the protein conformation that binds the tetrahedral intermediate(s) formed during glutamine hydrolysis. Inhibited by the product CTP, via allosteric rather than competitive inhibition. Catalyzes the ATP-dependent amination of UTP to CTP with either L-glutamine or ammonia as the source of nitrogen. Regulates intracellular CTP levels through interactions with the four ribonucleotide triphosphates. The polypeptide is CTP synthase (Nocardioides sp. (strain ATCC BAA-499 / JS614)).